The sequence spans 746 residues: Catalase-peroxidase (746 aa).

Polar residues predominate over residues 1-20 (MSSDTSSSRPPQPDSGTASK). The interval 1 to 42 (MSSDTSSSRPPQPDSGTASKSESENPAIPSPKPKAHAPLTNR) is disordered. The segment at residues 113–236 (WHAAGTYRIH…YGATTMGLIY (124 aa)) is a cross-link (tryptophyl-tyrosyl-methioninium (Trp-Tyr) (with M-262)). Catalysis depends on His-114, which acts as the Proton acceptor. A cross-link (tryptophyl-tyrosyl-methioninium (Tyr-Met) (with W-113)) is located at residues 236–262 (YVNPEGPEGKPDPIAAAIDIRETFGRM). His-277 is a binding site for heme b.

This sequence belongs to the peroxidase family. Peroxidase/catalase subfamily. As to quaternary structure, homodimer or homotetramer. Heme b serves as cofactor. Formation of the three residue Trp-Tyr-Met cross-link is important for the catalase, but not the peroxidase activity of the enzyme.

It carries out the reaction H2O2 + AH2 = A + 2 H2O. It catalyses the reaction 2 H2O2 = O2 + 2 H2O. Its function is as follows. Bifunctional enzyme with both catalase and broad-spectrum peroxidase activity. May play a role in the intracellular survival of mycobacteria. The protein is Catalase-peroxidase of Mycobacterium intracellulare.